Consider the following 117-residue polypeptide: Large ribosomal subunit protein eL34 (117 aa).

This sequence belongs to the eukaryotic ribosomal protein eL34 family. As to quaternary structure, component of the large ribosomal subunit.

Its subcellular location is the cytoplasm. The protein localises to the cytosol. It localises to the endoplasmic reticulum. In terms of biological role, component of the large ribosomal subunit. The ribosome is a large ribonucleoprotein complex responsible for the synthesis of proteins in the cell. This Danio rerio (Zebrafish) protein is Large ribosomal subunit protein eL34 (rpl34).